A 472-amino-acid chain; its full sequence is Alanine--anticapsin ligase (472 aa).

E109 contributes to the Mg(2+) binding site. 2 residues coordinate ATP: K138 and K178. The 214-residue stretch at 142–355 (RDAFNKAGVK…MAQLLLDVLC (214 aa)) folds into the ATP-grasp domain. L182 contributes to the Mg(2+) binding site. ATP is bound by residues 184-185 (SS), 226-229 (EEFL), and Q268. Residues E273 and 309–311 (HTE) each bind substrate. Mg(2+)-binding residues include E311 and E324. Residue 328–331 (RFAG) participates in substrate binding.

In terms of assembly, monomer or homodimer. It depends on Mg(2+) as a cofactor.

It catalyses the reaction L-anticapsin + L-alanine + ATP = bacilysin + ADP + phosphate + H(+). Its pathway is antibiotic biosynthesis; bacilysin biosynthesis. Functionally, part of the bacABCDEFG operon responsible for the biosynthesis of bacilysin, an irreversible inactivator of the glutaminase domain of glucosamine synthetase. Catalyzes the formation of alpha-dipeptides from various L-amino acids in the presence of ATP. In vivo catalyzes the ligation of L-alanine and L-anticapsin (epoxycyclohexanonyl-Ala) to produce the final bacilysin antibiotic (L-Ala-L-4S-cyclohexenonyl-Ala dipeptide). The substrate specificity is restricted to small amino acids such as L-Ala, for the N-terminal end of the dipeptide, whereas a wide range of hydrophobic amino acids such as L-Phe, L-Tyr and L-Met are recognized for the C-terminal end. This is Alanine--anticapsin ligase from Bacillus subtilis (strain 168).